The primary structure comprises 439 residues: MKLAVQHFSHSSEIDIRVWESLENRIFYHQANFSDAEGYSVLKAYLEQLDQQYGTQGNRLFYLSTPPDYFQEIIRNLNRHQLFYHEQGAQQPWSRLIIEKPFGVNLETARELQQCIDANIDEESVYRIDHYLGKETVQNILTIRFANTLFESCWNSQYIDHVQISVSESIGIGSRGNFFEKSGMLRDMVQNHLTQLLCLLTMEPPSEFFSEEIKKEKIKILKKILPIREEDAVRGQYGEGIVQDVSVLGYREEENVDPNSSVETYVALKLFIDNPRWKGVPFYLQAGKRLPKRTTDIAVIFKKSSYNLFNAENCPLCPLENDLLIIRIQPDEGVALQFNCKVPGTNKLVRPVKMDFRYDSYFNTVTPEAYERLLCDCILGDRTLFTSNEEVLASWELFSPLLEKWSQVRPIFPNYMAGSLRPQEADELLSRDGKAWRPY.

Lys-100 provides a ligand contact to NADP(+). Substrate-binding residues include His-130, Lys-134, Glu-168, and Asp-187. His-192 (proton acceptor) is an active-site residue. Lys-288 contacts substrate.

The protein belongs to the glucose-6-phosphate dehydrogenase family.

It catalyses the reaction D-glucose 6-phosphate + NADP(+) = 6-phospho-D-glucono-1,5-lactone + NADPH + H(+). It functions in the pathway carbohydrate degradation; pentose phosphate pathway; D-ribulose 5-phosphate from D-glucose 6-phosphate (oxidative stage): step 1/3. In terms of biological role, catalyzes the oxidation of glucose 6-phosphate to 6-phosphogluconolactone. The polypeptide is Glucose-6-phosphate 1-dehydrogenase (Chlamydia trachomatis serovar D (strain ATCC VR-885 / DSM 19411 / UW-3/Cx)).